Reading from the N-terminus, the 133-residue chain is Cytochrome c' (133 aa).

The heme c site is built by Arg12, Thr72, Cys122, Cys125, and His126.

In terms of processing, binds 1 heme c group covalently per subunit.

Cytochrome c' is the most widely occurring bacterial c-type cytochrome. Cytochromes c' are high-spin proteins and the heme has no sixth ligand. Their exact function is not known. This chain is Cytochrome c', found in Rhodocyclus tenuis (Rhodospirillum tenue).